The sequence spans 603 residues: Probable HECT-type ubiquitin ligase-interacting protein creD (603 aa).

2 disordered regions span residues 375 to 398 (ELDP…GTLS) and 432 to 499 (LNIT…MATP). Positions 443–455 (TDHESQNDSEHRR) are enriched in basic and acidic residues. Residues 465-481 (PSSGSNSHSPSSPVLSR) are compositionally biased toward low complexity. Over residues 482 to 492 (RPSDEVDHEHV) the composition is skewed to basic and acidic residues.

Belongs to the arrestin family. In terms of assembly, interacts with hulA.

Component of the regulatory network controlling carbon source utilization through ubiquitination and deubiquitination involving creA, creB, creC, creD and acrB. May be involved in signaling by recognizing appropriately phosphorylated substrates via its arrestin domains and then recruit a HECT-type ubiquitin ligase such as hulA, leading to ubiquitination of the substrate, providing a link between ubiquitination and phosphorylation in protein regulation and stability. The polypeptide is Probable HECT-type ubiquitin ligase-interacting protein creD (creD) (Aspergillus flavus (strain ATCC 200026 / FGSC A1120 / IAM 13836 / NRRL 3357 / JCM 12722 / SRRC 167)).